Here is a 396-residue protein sequence, read N- to C-terminus: Ribosomal RNA large subunit methyltransferase I (396 aa).

The PUA domain occupies serine 2–arginine 81.

This sequence belongs to the methyltransferase superfamily. RlmI family.

The protein resides in the cytoplasm. It carries out the reaction cytidine(1962) in 23S rRNA + S-adenosyl-L-methionine = 5-methylcytidine(1962) in 23S rRNA + S-adenosyl-L-homocysteine + H(+). Functionally, specifically methylates the cytosine at position 1962 (m5C1962) of 23S rRNA. This chain is Ribosomal RNA large subunit methyltransferase I, found in Shigella flexneri serotype 5b (strain 8401).